A 153-amino-acid polypeptide reads, in one-letter code: Endoribonuclease YbeY (153 aa).

3 residues coordinate Zn(2+): H114, H118, and H124.

Belongs to the endoribonuclease YbeY family. Zn(2+) serves as cofactor.

It is found in the cytoplasm. Functionally, single strand-specific metallo-endoribonuclease involved in late-stage 70S ribosome quality control and in maturation of the 3' terminus of the 16S rRNA. This is Endoribonuclease YbeY from Shewanella amazonensis (strain ATCC BAA-1098 / SB2B).